The primary structure comprises 317 residues: Ribosomal protein L11 methyltransferase (317 aa).

S-adenosyl-L-methionine is bound by residues threonine 158, glycine 179, aspartate 201, and asparagine 244.

This sequence belongs to the methyltransferase superfamily. PrmA family.

It localises to the cytoplasm. It carries out the reaction L-lysyl-[protein] + 3 S-adenosyl-L-methionine = N(6),N(6),N(6)-trimethyl-L-lysyl-[protein] + 3 S-adenosyl-L-homocysteine + 3 H(+). Methylates ribosomal protein L11. The chain is Ribosomal protein L11 methyltransferase from Streptococcus pyogenes serotype M49 (strain NZ131).